A 77-amino-acid polypeptide reads, in one-letter code: Translation initiation factor IF-1, chloroplastic (77 aa).

The region spanning 1-71 is the S1-like domain; the sequence is MKEQKWIHEG…TRGRIIYRLR (71 aa).

The protein belongs to the IF-1 family. Component of the 30S ribosomal translation pre-initiation complex which assembles on the 30S ribosome in the order IF-2 and IF-3, IF-1 and N-formylmethionyl-tRNA(fMet); mRNA recruitment can occur at any time during PIC assembly.

It is found in the plastid. The protein resides in the chloroplast. One of the essential components for the initiation of protein synthesis. Stabilizes the binding of IF-2 and IF-3 on the 30S subunit to which N-formylmethionyl-tRNA(fMet) subsequently binds. Helps modulate mRNA selection, yielding the 30S pre-initiation complex (PIC). Upon addition of the 50S ribosomal subunit IF-1, IF-2 and IF-3 are released leaving the mature 70S translation initiation complex. In Nandina domestica (Heavenly bamboo), this protein is Translation initiation factor IF-1, chloroplastic.